A 133-amino-acid chain; its full sequence is Large ribosomal subunit protein uL22c (133 aa).

It belongs to the universal ribosomal protein uL22 family. Part of the 50S ribosomal subunit.

Its subcellular location is the plastid. The protein resides in the chloroplast. In terms of biological role, this protein binds specifically to 23S rRNA. Functionally, the globular domain of the protein is located near the polypeptide exit tunnel on the outside of the subunit, while an extended beta-hairpin is found that lines the wall of the exit tunnel in the center of the 70S ribosome. This chain is Large ribosomal subunit protein uL22c (rpl22), found in Manihot esculenta (Cassava).